Here is a 566-residue protein sequence, read N- to C-terminus: Erythroid membrane-associated protein (566 aa).

An N-terminal signal peptide occupies residues 1–29 (MERPSPCGSWLVGCLFTIAVFQPPVQVLG). Residues 30–139 (DAGKVYIAPL…SSREDNVTLQ (110 aa)) enclose the Ig-like V-type domain. The Extracellular segment spans residues 30 to 246 (DAGKVYIAPL…PERGSLSSPA (217 aa)). C47 and C123 form a disulfide bridge. N-linked (GlcNAc...) asparagine glycans are attached at residues N135 and N214. The chain crosses the membrane as a helical span at residues 247-267 (VALSVVLPVLGLLILLGIWLI). The Cytoplasmic segment spans residues 268-566 (CKQKKSKEKL…ALKGLKVPSL (299 aa)). The B30.2/SPRY domain maps to 311–509 (KLKRAAANAG…LIICTELQKS (199 aa)). The residue at position 509 (S509) is a Phosphoserine.

It belongs to the immunoglobulin superfamily. BTN/MOG family. Post-translationally, glycosylated. In terms of tissue distribution, expressed in spleen and bone marrow.

It is found in the cell membrane. Its subcellular location is the cytoplasm. In terms of biological role, possible role as a cell-adhesion or receptor molecule of erythroid cells. This Mus musculus (Mouse) protein is Erythroid membrane-associated protein (Ermap).